A 264-amino-acid chain; its full sequence is Phosphonoacetaldehyde hydrolase (264 aa).

Asp-10 serves as the catalytic Nucleophile. Mg(2+) contacts are provided by Asp-10 and Ala-12. The Schiff-base intermediate with substrate role is filled by Lys-52. Position 185 (Asp-185) interacts with Mg(2+).

Belongs to the HAD-like hydrolase superfamily. PhnX family. As to quaternary structure, homodimer. It depends on Mg(2+) as a cofactor.

The catalysed reaction is phosphonoacetaldehyde + H2O = acetaldehyde + phosphate + H(+). In terms of biological role, involved in phosphonate degradation. This chain is Phosphonoacetaldehyde hydrolase, found in Parabacteroides distasonis (strain ATCC 8503 / DSM 20701 / CIP 104284 / JCM 5825 / NCTC 11152).